A 930-amino-acid polypeptide reads, in one-letter code: Translation initiation factor IF-2 (930 aa).

Positions 31–317 (FVKSASSTVE…RKSKRAKRAE (287 aa)) are disordered. The span at 61–78 (PAAGASNGAPAKPSAPGA) shows a compositional bias: low complexity. Composition is skewed to pro residues over residues 79-99 (RPGP…PAPA) and 108-120 (PAAP…PPAP). Over residues 121–135 (AASAAPPSAPEAPSA) the composition is skewed to low complexity. 2 stretches are compositionally biased toward pro residues: residues 136-158 (RPTP…PAPR) and 178-192 (PRPQ…PRPG). The segment covering 193 to 205 (PGAGGPRPGGGPR) has biased composition (gly residues). A compositionally biased stretch (pro residues) spans 212–242 (NMPPRPVGGPRPGGGPRPGGGPRPGAGPRPT). The span at 244-301 (GGAGRPGGGGGGNYRGGGAGGGGGAGGAAAGGFRGRPGGGGGRPGQRGGAAGAFGRPG) shows a compositional bias: gly residues. Residues 305 to 314 (KRGRKSKRAK) are compositionally biased toward basic residues. Residues 426-598 (FRPPVVTVMG…VVLTADASLD (173 aa)) form the tr-type G domain. The G1 stretch occupies residues 435–442 (GHVDHGKT). Residue 435–442 (GHVDHGKT) participates in GTP binding. The tract at residues 460 to 464 (GITQH) is G2. The tract at residues 485–488 (DTPG) is G3. GTP contacts are provided by residues 485–489 (DTPGH) and 539–542 (NKID). The segment at 539–542 (NKID) is G4. Positions 575–577 (SAK) are G5.

This sequence belongs to the TRAFAC class translation factor GTPase superfamily. Classic translation factor GTPase family. IF-2 subfamily.

The protein resides in the cytoplasm. In terms of biological role, one of the essential components for the initiation of protein synthesis. Protects formylmethionyl-tRNA from spontaneous hydrolysis and promotes its binding to the 30S ribosomal subunits. Also involved in the hydrolysis of GTP during the formation of the 70S ribosomal complex. This chain is Translation initiation factor IF-2, found in Mycolicibacterium gilvum (strain PYR-GCK) (Mycobacterium gilvum (strain PYR-GCK)).